A 1502-amino-acid chain; its full sequence is Ras guanine nucleotide exchange factor P (1502 aa).

The region spanning Phe-84–Glu-187 is the Calponin-homology (CH) domain. Disordered stretches follow at residues Ala-216–Glu-242, Gln-325–Asn-436, Glu-456–Gly-534, and Thr-589–Asn-935. Composition is skewed to low complexity over residues Ser-218–Glu-242, Gln-325–Thr-345, Thr-371–His-400, and Ser-407–Thr-421. Positions Gln-287–Gln-328 form a coiled coil. The segment covering Pro-422–Asn-436 has biased composition (polar residues). A coiled-coil region spans residues Glu-451–Lys-515. Low complexity predominate over residues Asn-458–Asn-508. The segment covering His-518–Pro-528 has biased composition (pro residues). Low complexity-rich tracts occupy residues Thr-589–Asn-646, Thr-663–Ile-675, Ser-686–Pro-719, Asn-764–Ser-790, and Asn-813–Asn-853. Over residues Leu-861–Asn-876 the composition is skewed to polar residues. Residues Thr-883–Asn-935 show a composition bias toward low complexity. Residues Val-1032–Gln-1076 adopt a coiled-coil conformation. Positions Gly-1102–Pro-1249 constitute an N-terminal Ras-GEF domain. The region spanning Asp-1267–Arg-1498 is the Ras-GEF domain.

In terms of biological role, promotes the exchange of Ras-bound GDP by GTP. This Dictyostelium discoideum (Social amoeba) protein is Ras guanine nucleotide exchange factor P (gefP).